A 227-amino-acid polypeptide reads, in one-letter code: UPF0659 protein YMR090W (227 aa).

Belongs to the UPF0659 family.

The protein localises to the cytoplasm. The protein is UPF0659 protein YMR090W of Saccharomyces cerevisiae (strain ATCC 204508 / S288c) (Baker's yeast).